The primary structure comprises 126 residues: Glycine cleavage system H protein (126 aa).

In terms of domain architecture, Lipoyl-binding spans Thr24–Lys105. An N6-lipoyllysine modification is found at Lys65.

It belongs to the GcvH family. As to quaternary structure, the glycine cleavage system is composed of four proteins: P, T, L and H. The cofactor is (R)-lipoate.

In terms of biological role, the glycine cleavage system catalyzes the degradation of glycine. The H protein shuttles the methylamine group of glycine from the P protein to the T protein. In Burkholderia vietnamiensis (strain G4 / LMG 22486) (Burkholderia cepacia (strain R1808)), this protein is Glycine cleavage system H protein.